The chain runs to 511 residues: V-type proton ATPase subunit B (511 aa).

An ATP-binding site is contributed by R381. Residues F484 to A511 form a disordered region. The span at Q491 to P501 shows a compositional bias: acidic residues. The span at D502–A511 shows a compositional bias: basic and acidic residues.

Belongs to the ATPase alpha/beta chains family. In terms of assembly, V-ATPase is a heteromultimeric enzyme composed of a peripheral catalytic V1 complex (components A to H) attached to an integral membrane V0 proton pore complex (components: a, c, c', c'', d, e, f and VOA1).

The protein resides in the vacuole membrane. In terms of biological role, non-catalytic subunit of the V1 complex of vacuolar(H+)-ATPase (V-ATPase), a multisubunit enzyme composed of a peripheral complex (V1) that hydrolyzes ATP and a membrane integral complex (V0) that translocates protons. V-ATPase is responsible for acidifying and maintaining the pH of intracellular compartments. This Candida tropicalis (Yeast) protein is V-type proton ATPase subunit B (VMA2).